The primary structure comprises 378 residues: Cyclic di-GMP phosphodiesterase response regulator RpfG (378 aa).

The 119-residue stretch at 29–147 (NIVIVDDQMS…ELRARCSNLL (119 aa)) folds into the Response regulatory domain. 4-aspartylphosphate is present on aspartate 80. The HD-GYP domain maps to 174–371 (VEERERETLS…LEQICGQFST (198 aa)).

In terms of assembly, interacts with a subset of GGDEF domain-containing proteins. Phosphorylated and activated by RpfC.

The protein localises to the cytoplasm. The enzyme catalyses 3',3'-c-di-GMP + 2 H2O = 2 GMP + 2 H(+). In terms of biological role, member of the two-component regulatory system RpfG/RpfC, which is involved in the perception and response to the diffusible signaling factor (DSF), which is essential for cell-cell signaling. Detection of DSF leads to the positive regulation of biofilm dispersal and the production of virulence factors. Activated RpfG degrades cyclic di-GMP to GMP, leading to the activation of Clp, a global transcriptional regulator that regulates a large set of genes in DSF pathway. May also directly control genes involved in biofilm dispersal. This Xanthomonas campestris pv. campestris (strain 8004) protein is Cyclic di-GMP phosphodiesterase response regulator RpfG (rpfG).